We begin with the raw amino-acid sequence, 263 residues long: Elongation factor Ts (263 aa).

The tract at residues 82–85 is involved in Mg(2+) ion dislocation from EF-Tu; sequence TDFV. Low complexity predominate over residues 221–251; it reads APPAVVEAPVAETPEPAVAETPEAKPAATES. The disordered stretch occupies residues 221-263; sequence APPAVVEAPVAETPEPAVAETPEAKPAATESKPAKSKSAKKKK. Over residues 254–263 the composition is skewed to basic residues; sequence AKSKSAKKKK.

This sequence belongs to the EF-Ts family.

The protein resides in the cytoplasm. Functionally, associates with the EF-Tu.GDP complex and induces the exchange of GDP to GTP. It remains bound to the aminoacyl-tRNA.EF-Tu.GTP complex up to the GTP hydrolysis stage on the ribosome. The polypeptide is Elongation factor Ts (Cyanothece sp. (strain PCC 7425 / ATCC 29141)).